Consider the following 156-residue polypeptide: Small ribosomal subunit protein uS7 (156 aa).

It belongs to the universal ribosomal protein uS7 family. In terms of assembly, part of the 30S ribosomal subunit. Contacts proteins S9 and S11.

Functionally, one of the primary rRNA binding proteins, it binds directly to 16S rRNA where it nucleates assembly of the head domain of the 30S subunit. Is located at the subunit interface close to the decoding center, probably blocks exit of the E-site tRNA. In Synechococcus sp. (strain JA-3-3Ab) (Cyanobacteria bacterium Yellowstone A-Prime), this protein is Small ribosomal subunit protein uS7.